A 356-amino-acid chain; its full sequence is Putative [LysW]-L-2-aminoadipate/[LysW]-L-glutamate phosphate reductase (356 aa).

11-14 (SGYT) provides a ligand contact to NADP(+). Cysteine 157 is an active-site residue. Asparagine 323 contacts NADP(+).

It belongs to the NAGSA dehydrogenase family. Type 1 subfamily. LysY sub-subfamily.

It is found in the cytoplasm. It carries out the reaction [amino-group carrier protein]-C-terminal-N-(1-carboxy-5-oxopentan-1-yl)-L-glutamine + phosphate + NADP(+) = [amino-group carrier protein]-C-terminal-N-(1-carboxy-5-phosphooxy-5-oxopentan-1-yl)-L-glutamine + NADPH + H(+). The catalysed reaction is [amino-group carrier protein]-C-terminal-gamma-(L-glutamyl-5-semialdehyde)-L-glutamate + phosphate + NADP(+) = [amino-group carrier protein]-C-terminal-gamma-(5-phospho-L-glutamyl)-L-glutamate + NADPH + H(+). It participates in amino-acid biosynthesis; L-lysine biosynthesis via AAA pathway; L-lysine from L-alpha-aminoadipate (Thermus route): step 3/5. Its pathway is amino-acid biosynthesis; L-arginine biosynthesis. In terms of biological role, involved in both the arginine and lysine biosynthetic pathways. The sequence is that of Putative [LysW]-L-2-aminoadipate/[LysW]-L-glutamate phosphate reductase from Ignicoccus hospitalis (strain KIN4/I / DSM 18386 / JCM 14125).